A 386-amino-acid polypeptide reads, in one-letter code: Enoyl-[acyl-carrier-protein] reductase 2, mitochondrial (386 aa).

Residues 1 to 22 (MYSVLKQSIRPRLLATHNQFRT) constitute a mitochondrion transit peptide. The Proton donor role is filled by Y79. NADP(+) contacts are provided by residues N172, 199 to 202 (TSAV), 222 to 224 (RDR), 296 to 299 (YGGM), 321 to 323 (FWV), and K381.

Belongs to the zinc-containing alcohol dehydrogenase family. Quinone oxidoreductase subfamily. In terms of assembly, homodimer and heterodimer with ETR1.

The protein localises to the mitochondrion. It carries out the reaction a 2,3-saturated acyl-[ACP] + NADP(+) = a (2E)-enoyl-[ACP] + NADPH + H(+). In terms of biological role, required for respiration and the maintenance of the mitochondrial compartment. Oxidoreductase with a preference for short and medium chain substrates, including trans-2-hexenoyl-CoA (C6), trans-2-decenoyl-CoA (C10), and trans-2-hexadecenoyl-CoA (C16). May play a role in mitochondrial fatty acid synthesis. This chain is Enoyl-[acyl-carrier-protein] reductase 2, mitochondrial (ETR2), found in Candida tropicalis (Yeast).